The sequence spans 344 residues: MKKLLNTVYVTTEGTGLRKDGENLVAELDGVQKGRVPLHMVGSVVVFGGTYVSPGLMGACAAHGITIVLLDRVGRFQARVEGPVAGNVLLRRAQYKASEAPEDIVKSLILGKVSNQRAVLLRALRDHGADFPAAEALAVKDAIDRMAHILRKVGASAEDADHLRGAEGEAASLYFGVFGQLIRSPDGDFAFRGRSRRPPLDPTNALLSFLYTLLTHDCRSACESVGLDPAVGFLHRDRPGRPSLALDLMEELRPVLVDRLALSLINRRQLRATDFQRLDGGAVLLTDEARKTVLSAWQERKKQERRHPFLEESAPLGLVPYLQAQMLARHLRGDLDAYPPWFWK.

Glu167, His235, and Glu250 together coordinate Mn(2+).

The protein belongs to the CRISPR-associated endonuclease Cas1 family. In terms of assembly, homodimer, forms a heterotetramer with a Cas2 homodimer. Mg(2+) serves as cofactor. It depends on Mn(2+) as a cofactor.

Functionally, CRISPR (clustered regularly interspaced short palindromic repeat), is an adaptive immune system that provides protection against mobile genetic elements (viruses, transposable elements and conjugative plasmids). CRISPR clusters contain spacers, sequences complementary to antecedent mobile elements, and target invading nucleic acids. CRISPR clusters are transcribed and processed into CRISPR RNA (crRNA). Acts as a dsDNA endonuclease. Involved in the integration of spacer DNA into the CRISPR cassette. This Rhodospirillum rubrum (strain ATCC 11170 / ATH 1.1.1 / DSM 467 / LMG 4362 / NCIMB 8255 / S1) protein is CRISPR-associated endonuclease Cas1 2.